The primary structure comprises 589 residues: Aspartate--tRNA ligase (589 aa).

L-aspartate is bound at residue Glu-174. An aspartate region spans residues 198-201 (QLFK). Position 220 (Arg-220) interacts with L-aspartate. Residues 220 to 222 (RDE) and Gln-229 contribute to the ATP site. His-448 contributes to the L-aspartate binding site. Glu-483 lines the ATP pocket. L-aspartate is bound at residue Arg-490. Residue 535 to 538 (GIDR) participates in ATP binding.

This sequence belongs to the class-II aminoacyl-tRNA synthetase family. Type 1 subfamily. In terms of assembly, homodimer.

The protein resides in the cytoplasm. The enzyme catalyses tRNA(Asp) + L-aspartate + ATP = L-aspartyl-tRNA(Asp) + AMP + diphosphate. In terms of biological role, catalyzes the attachment of L-aspartate to tRNA(Asp) in a two-step reaction: L-aspartate is first activated by ATP to form Asp-AMP and then transferred to the acceptor end of tRNA(Asp). This is Aspartate--tRNA ligase from Xylella fastidiosa (strain M12).